Reading from the N-terminus, the 162-residue chain is Peptide methionine sulfoxide reductase MsrA (162 aa).

Cys16 is a catalytic residue.

Belongs to the MsrA Met sulfoxide reductase family.

The catalysed reaction is L-methionyl-[protein] + [thioredoxin]-disulfide + H2O = L-methionyl-(S)-S-oxide-[protein] + [thioredoxin]-dithiol. The enzyme catalyses [thioredoxin]-disulfide + L-methionine + H2O = L-methionine (S)-S-oxide + [thioredoxin]-dithiol. Its function is as follows. Has an important function as a repair enzyme for proteins that have been inactivated by oxidation. Catalyzes the reversible oxidation-reduction of methionine sulfoxide in proteins to methionine. In Geobacter sulfurreducens (strain ATCC 51573 / DSM 12127 / PCA), this protein is Peptide methionine sulfoxide reductase MsrA.